Consider the following 110-residue polypeptide: MSDDRRRGDEDGGAGTGVITKTKPKTKKPSLYKVLLLNDDYTPMEFVVHVLERFFNKGRDEATVIMLHVHQHGVGICGLYTYEVAETKVTQVMDFAQQHQHPLQCTMERE.

A compositionally biased stretch (basic and acidic residues) spans 1–10 (MSDDRRRGDE). The segment at 1–27 (MSDDRRRGDEDGGAGTGVITKTKPKTK) is disordered.

It belongs to the ClpS family. As to quaternary structure, binds to the N-terminal domain of the chaperone ClpA.

Involved in the modulation of the specificity of the ClpAP-mediated ATP-dependent protein degradation. The protein is ATP-dependent Clp protease adapter protein ClpS of Parvibaculum lavamentivorans (strain DS-1 / DSM 13023 / NCIMB 13966).